Reading from the N-terminus, the 513-residue chain is ATP synthase subunit alpha (513 aa).

An ATP-binding site is contributed by glycine 169–threonine 176.

Belongs to the ATPase alpha/beta chains family. In terms of assembly, F-type ATPases have 2 components, CF(1) - the catalytic core - and CF(0) - the membrane proton channel. CF(1) has five subunits: alpha(3), beta(3), gamma(1), delta(1), epsilon(1). CF(0) has three main subunits: a(1), b(2) and c(9-12). The alpha and beta chains form an alternating ring which encloses part of the gamma chain. CF(1) is attached to CF(0) by a central stalk formed by the gamma and epsilon chains, while a peripheral stalk is formed by the delta and b chains.

Its subcellular location is the cell inner membrane. The enzyme catalyses ATP + H2O + 4 H(+)(in) = ADP + phosphate + 5 H(+)(out). Produces ATP from ADP in the presence of a proton gradient across the membrane. The alpha chain is a regulatory subunit. In Ralstonia nicotianae (strain ATCC BAA-1114 / GMI1000) (Ralstonia solanacearum), this protein is ATP synthase subunit alpha.